The sequence spans 500 residues: Aspartyl/glutamyl-tRNA(Asn/Gln) amidotransferase subunit B (500 aa).

Belongs to the GatB/GatE family. GatB subfamily. As to quaternary structure, heterotrimer of A, B and C subunits.

The catalysed reaction is L-glutamyl-tRNA(Gln) + L-glutamine + ATP + H2O = L-glutaminyl-tRNA(Gln) + L-glutamate + ADP + phosphate + H(+). It carries out the reaction L-aspartyl-tRNA(Asn) + L-glutamine + ATP + H2O = L-asparaginyl-tRNA(Asn) + L-glutamate + ADP + phosphate + 2 H(+). Allows the formation of correctly charged Asn-tRNA(Asn) or Gln-tRNA(Gln) through the transamidation of misacylated Asp-tRNA(Asn) or Glu-tRNA(Gln) in organisms which lack either or both of asparaginyl-tRNA or glutaminyl-tRNA synthetases. The reaction takes place in the presence of glutamine and ATP through an activated phospho-Asp-tRNA(Asn) or phospho-Glu-tRNA(Gln). This Rhizobium meliloti (strain 1021) (Ensifer meliloti) protein is Aspartyl/glutamyl-tRNA(Asn/Gln) amidotransferase subunit B.